A 453-amino-acid chain; its full sequence is Allantoinase (453 aa).

Residues His-59, His-61, Lys-146, His-186, His-242, and Asp-315 each contribute to the Zn(2+) site. Lys-146 is subject to N6-carboxylysine.

This sequence belongs to the metallo-dependent hydrolases superfamily. Allantoinase family. In terms of assembly, homotetramer. Zn(2+) is required as a cofactor. In terms of processing, carboxylation allows a single lysine to coordinate two zinc ions.

It carries out the reaction (S)-allantoin + H2O = allantoate + H(+). The protein operates within nitrogen metabolism; (S)-allantoin degradation; allantoate from (S)-allantoin: step 1/1. Its function is as follows. Catalyzes the conversion of allantoin (5-ureidohydantoin) to allantoic acid by hydrolytic cleavage of the five-member hydantoin ring. This chain is Allantoinase, found in Escherichia coli (strain 55989 / EAEC).